The chain runs to 467 residues: NADH-ubiquinone oxidoreductase chain 4 (467 aa).

The next 13 membrane-spanning stretches (helical) occupy residues 21 to 40 (SMSK…PTLY), 54 to 74 (MADV…ISNW), 79 to 99 (STLY…NFMC), 105 to 125 (FYMY…LYGA), 135 to 155 (VLMY…LYEV), 168 to 188 (LVLS…GIAV), 207 to 227 (PLAG…FAMI), 239 to 259 (VTYT…TSII), 266 to 286 (LKVI…LGML), 297 to 317 (LVLC…VGGM), 330 to 350 (FQGL…LSFC), 367 to 387 (LTGA…SVLL), and 420 to 440 (VLMI…SWVM).

The protein belongs to the complex I subunit 4 family.

The protein resides in the mitochondrion membrane. The catalysed reaction is a ubiquinone + NADH + 5 H(+)(in) = a ubiquinol + NAD(+) + 4 H(+)(out). Functionally, core subunit of the mitochondrial membrane respiratory chain NADH dehydrogenase (Complex I) that is believed to belong to the minimal assembly required for catalysis. Complex I functions in the transfer of electrons from NADH to the respiratory chain. The immediate electron acceptor for the enzyme is believed to be ubiquinone. The sequence is that of NADH-ubiquinone oxidoreductase chain 4 (ND4) from Debaryomyces hansenii (strain ATCC 36239 / CBS 767 / BCRC 21394 / JCM 1990 / NBRC 0083 / IGC 2968) (Yeast).